A 184-amino-acid polypeptide reads, in one-letter code: uncharacterized protein (184 aa).

This is an uncharacterized protein from Dictyostelium discoideum (Social amoeba).